Here is a 162-residue protein sequence, read N- to C-terminus: MVDSKKNKKQQVTDFSNLLSQSKGFVIFDYSGMSAVDATLMRKKLFNKGSKIKIVKNNILRRALKTSNFEGVDESVIKGKIAVAVGINEILETLKVVDSVVKEKELMKFVCGHFDNRIFNSDDLQKIAKLPGRNELYGMFLSVLQAPLRKFLYALQAVRNAK.

The protein belongs to the universal ribosomal protein uL10 family. Part of the ribosomal stalk of the 50S ribosomal subunit. The N-terminus interacts with L11 and the large rRNA to form the base of the stalk. The C-terminus forms an elongated spine to which L12 dimers bind in a sequential fashion forming a multimeric L10(L12)X complex.

In terms of biological role, forms part of the ribosomal stalk, playing a central role in the interaction of the ribosome with GTP-bound translation factors. The polypeptide is Large ribosomal subunit protein uL10 (rplJ) (Mycoplasma genitalium (strain ATCC 33530 / DSM 19775 / NCTC 10195 / G37) (Mycoplasmoides genitalium)).